The primary structure comprises 223 residues: MAAIRASFLLAAAALLALWCSDHGGVVASDPSHLQDLCVADKASTVRVNGVACKDGEDVAAEDFFFSGLHMAGNTTNKQGSAVTAVNVAQVPGLNTLGISLARIDYALHGLNPPHTHPRATEILTVLEGSLYVGFVTSNPENKLFTKVINKGDVFVFPKGLVHFQFNYGTTDAVAIVALSSQNPGVITVANAVFGSKPSITDDILAKAFQVEKTVVDQIQAKF.

The N-terminal stretch at M1–A28 is a signal peptide. C38 and C53 form a disulfide bridge. Residues S67–D217 form the Cupin type-1 domain. N74 carries N-linked (GlcNAc...) asparagine glycosylation. Residues H115, H117, E122, and H163 each coordinate Mn(2+).

Belongs to the germin family. Oligomer (believed to be a pentamer but probably hexamer).

The protein resides in the secreted. The protein localises to the extracellular space. Its subcellular location is the apoplast. May play a role in plant defense. Probably has no oxalate oxidase activity even if the active site is conserved. In Oryza sativa subsp. japonica (Rice), this protein is Putative germin-like protein 2-3.